Consider the following 450-residue polypeptide: Glucose-6-phosphate isomerase (450 aa).

At T39 the chain carries Phosphothreonine. The active-site Proton donor is E291. Residues H312 and K426 contribute to the active site.

The protein belongs to the GPI family.

The protein localises to the cytoplasm. It carries out the reaction alpha-D-glucose 6-phosphate = beta-D-fructose 6-phosphate. The protein operates within carbohydrate biosynthesis; gluconeogenesis. It participates in carbohydrate degradation; glycolysis; D-glyceraldehyde 3-phosphate and glycerone phosphate from D-glucose: step 2/4. In terms of biological role, catalyzes the reversible isomerization of glucose-6-phosphate to fructose-6-phosphate. The protein is Glucose-6-phosphate isomerase of Bacillus cytotoxicus (strain DSM 22905 / CIP 110041 / 391-98 / NVH 391-98).